The primary structure comprises 280 residues: F-box only protein 27 (280 aa).

The tract at residues 1–26 is disordered; the sequence is MGAWASRGRAARVPAPEPESEPEEAL. Positions 25–72 constitute an F-box domain; that stretch reads ALDLSQLPPELLLVVLSHVPPRTLLGRCRQVCRGWRALVDGQALWLLI. The FBA domain maps to 100–277; sequence PCPLGRFCAR…VTNSSVIVRV (178 aa).

In terms of assembly, part of a SCF (SKP1-cullin-F-box) protein ligase complex. Interacts with SKP1 and CUL1.

Its function is as follows. Substrate-recognition component of the SCF (SKP1-CUL1-F-box protein)-type E3 ubiquitin ligase complex. Able to recognize and bind complex-type oligosaccharides. The polypeptide is F-box only protein 27 (FBXO27) (Macaca fascicularis (Crab-eating macaque)).